Consider the following 73-residue polypeptide: Protein RALF-like 10 (73 aa).

The first 17 residues, 1-17 (MKALVICLLVIFAAVIA), serve as a signal peptide directing secretion. Intrachain disulfides connect Cys35–Cys44 and Cys64–Cys70.

It belongs to the plant rapid alkalinization factor (RALF) family. In terms of tissue distribution, expressed in flowers.

It is found in the secreted. Its function is as follows. Cell signaling peptide that may regulate plant stress, growth, and development. Mediates a rapid alkalinization of extracellular space by mediating a transient increase in the cytoplasmic Ca(2+) concentration leading to a calcium-dependent signaling events through a cell surface receptor and a concomitant activation of some intracellular mitogen-activated protein kinases. This is Protein RALF-like 10 (RALFL10) from Arabidopsis thaliana (Mouse-ear cress).